The sequence spans 296 residues: Meiotically up-regulated gene 2 protein (296 aa).

It belongs to the UPF0612 family.

It localises to the cytoplasm. It is found in the nucleus. Its function is as follows. Has a role in meiosis. The sequence is that of Meiotically up-regulated gene 2 protein (mug2) from Schizosaccharomyces pombe (strain 972 / ATCC 24843) (Fission yeast).